Reading from the N-terminus, the 219-residue chain is Probable GTP-binding protein EngB (219 aa).

Positions 31–205 (VGVEIAFAGR…LSILNEWCHP (175 aa)) constitute an EngB-type G domain. Residues 39-46 (GRSNAGKS), 66-70 (GRTQL), 84-87 (DLPG), 151-154 (TKSD), and 184-186 (FSA) each bind GTP. The Mg(2+) site is built by serine 46 and threonine 68.

Belongs to the TRAFAC class TrmE-Era-EngA-EngB-Septin-like GTPase superfamily. EngB GTPase family. Mg(2+) is required as a cofactor.

Functionally, necessary for normal cell division and for the maintenance of normal septation. The chain is Probable GTP-binding protein EngB from Shewanella sp. (strain MR-7).